Reading from the N-terminus, the 284-residue chain is Small ribosomal subunit protein uS2 (284 aa).

It belongs to the universal ribosomal protein uS2 family.

The protein is Small ribosomal subunit protein uS2 (rpsB) of Mycoplasma genitalium (strain ATCC 33530 / DSM 19775 / NCTC 10195 / G37) (Mycoplasmoides genitalium).